We begin with the raw amino-acid sequence, 489 residues long: Coronin-1B (489 aa).

Ser-2 carries the phosphoserine modification. WD repeat units lie at residues 80–120 (GHTG…LTSP), 130–170 (GHTK…ELYR), 174–213 (LHPD…LVAE), 217–260 (AHEG…EPMA), and 265–305 (DSSN…PYIH). A disordered region spans residues 414–443 (DSRPAMAPGSSRLGAPASTTAAADATPSGS). The segment covering 427–443 (GAPASTTAAADATPSGS) has biased composition (low complexity). A coiled-coil region spans residues 449 to 474 (EAGKLEEVMQELRALRALVKEQGERI).

Belongs to the WD repeat coronin family. In terms of assembly, forms homooligomers, but does not form complexes with the other coronins. Interacts with Arp2/3 complex components, including ACTR2, ARPC1B and ARPC2. Binds actin. Phosphorylation on Ser-2 regulates the interaction with the Arp2/3 complex and cell motility in fibroblasts. Phosphorylation does not seem to affect subcellular location.

It localises to the cytoplasm. The protein localises to the cytoskeleton. The protein resides in the stress fiber. Regulates leading edge dynamics and cell motility in fibroblasts. May be involved in cytokinesis and signal transduction. The chain is Coronin-1B (CORO1B) from Pongo abelii (Sumatran orangutan).